Here is a 404-residue protein sequence, read N- to C-terminus: Glucose-1-phosphate adenylyltransferase 2 (404 aa).

Residues Tyr-97, Gly-162, 177-178 (EK), and Ser-195 contribute to the alpha-D-glucose 1-phosphate site.

It belongs to the bacterial/plant glucose-1-phosphate adenylyltransferase family. In terms of assembly, homotetramer.

It carries out the reaction alpha-D-glucose 1-phosphate + ATP + H(+) = ADP-alpha-D-glucose + diphosphate. It functions in the pathway glycan biosynthesis; glycogen biosynthesis. Involved in the biosynthesis of ADP-glucose, a building block required for the elongation reactions to produce glycogen. Catalyzes the reaction between ATP and alpha-D-glucose 1-phosphate (G1P) to produce pyrophosphate and ADP-Glc. The polypeptide is Glucose-1-phosphate adenylyltransferase 2 (Vibrio vulnificus (strain CMCP6)).